The primary structure comprises 277 residues: Elongation factor Ts (277 aa).

An involved in Mg(2+) ion dislocation from EF-Tu region spans residues 81–84 (TDFV).

The protein belongs to the EF-Ts family.

It localises to the cytoplasm. Its function is as follows. Associates with the EF-Tu.GDP complex and induces the exchange of GDP to GTP. It remains bound to the aminoacyl-tRNA.EF-Tu.GTP complex up to the GTP hydrolysis stage on the ribosome. This Amoebophilus asiaticus (strain 5a2) protein is Elongation factor Ts.